Consider the following 216-residue polypeptide: Somatotropin (216 aa).

A signal peptide spans 1-26; that stretch reads MAAGPRTSVLLAFGLLCLPWPQDVGA. Histidine 45 provides a ligand contact to Zn(2+). Cysteine 78 and cysteine 189 are oxidised to a cystine. The residue at position 131 (serine 131) is a Phosphoserine. A Zn(2+)-binding site is contributed by glutamate 198. Cysteine 206 and cysteine 214 form a disulfide bridge.

This sequence belongs to the somatotropin/prolactin family.

It localises to the secreted. Its function is as follows. Plays an important role in growth control. Its major role in stimulating body growth is to stimulate the liver and other tissues to secrete IGF1. It stimulates both the differentiation and proliferation of myoblasts. It also stimulates amino acid uptake and protein synthesis in muscle and other tissues. The sequence is that of Somatotropin (GH1) from Equus caballus (Horse).